A 473-amino-acid chain; its full sequence is ATP synthase subunit beta (473 aa).

153 to 160 is a binding site for ATP; sequence GGAGVGKT.

This sequence belongs to the ATPase alpha/beta chains family. As to quaternary structure, F-type ATPases have 2 components, CF(1) - the catalytic core - and CF(0) - the membrane proton channel. CF(1) has five subunits: alpha(3), beta(3), gamma(1), delta(1), epsilon(1). CF(0) has three main subunits: a(1), b(2) and c(9-12). The alpha and beta chains form an alternating ring which encloses part of the gamma chain. CF(1) is attached to CF(0) by a central stalk formed by the gamma and epsilon chains, while a peripheral stalk is formed by the delta and b chains.

Its subcellular location is the cell inner membrane. It carries out the reaction ATP + H2O + 4 H(+)(in) = ADP + phosphate + 5 H(+)(out). Functionally, produces ATP from ADP in the presence of a proton gradient across the membrane. The catalytic sites are hosted primarily by the beta subunits. The protein is ATP synthase subunit beta of Rickettsia bellii (strain RML369-C).